A 438-amino-acid chain; its full sequence is DEAD-box ATP-dependent RNA helicase 58, chloroplastic (438 aa).

A chloroplast-targeting transit peptide spans 1–44 (MAAFSGCASPLSTTLRSGLAPFTLRHRLRLRRLRASAATLREVC). The Q motif signature appears at 41–69 (REVCAGRVPEHVLQRAEEVGYVVPTEVQE). One can recognise a Helicase ATP-binding domain in the interval 72–245 (LPVLLSGQDC…DCVQHKWTKT (174 aa)). Residue 85–92 (AQTGSGKT) coordinates ATP. Residues 190–193 (DEVD) carry the DEAD box motif. Residues 274-436 (RLHVLLSLLE…ELPVESMFAF (163 aa)) form the Helicase C-terminal domain.

Belongs to the DEAD box helicase family.

The protein resides in the plastid. It is found in the chloroplast. The catalysed reaction is ATP + H2O = ADP + phosphate + H(+). This chain is DEAD-box ATP-dependent RNA helicase 58, chloroplastic, found in Oryza sativa subsp. japonica (Rice).